The chain runs to 365 residues: MPEITVRAKSKTYPVYINEFALDDVRGKWTESLAKYSHVFVLTDGHVAELHKSKLDEILTDLPVVTYYVAPNGEEAKTFRVYEDVMTKMIESGLDRKAVLIAFGGGVIGDLGGFVASTYMRGIPFYQVPTTVLAHDSAVGGKVAINHPLGKNMIGNFYQPEAVIYDTQFFATLPEREMRSGFAEMIKHALISDYTLLRALMDTFTEPKDFYTKDLTPFLQRGIEIKANIVAQDETEQGVRAYLNFGHTFGHALEAYGNFSKWLHGEAITYGMIYALTMSETIYGLDFNLAEFKTWLRNLGYDTTFDVTVPFSNILENMRHDKKTTFNEISMVLLKEIGKPVIFKAEDELIFETYKRVMRNGEDAF.

NAD(+) is bound by residues 106–110 (GVIGD), 130–131 (TT), K142, K151, and 169–172 (FFAT). Residues E184, H247, and H264 each coordinate Zn(2+).

The protein belongs to the sugar phosphate cyclases superfamily. Dehydroquinate synthase family. It depends on Co(2+) as a cofactor. The cofactor is Zn(2+). Requires NAD(+) as cofactor.

The protein localises to the cytoplasm. The enzyme catalyses 7-phospho-2-dehydro-3-deoxy-D-arabino-heptonate = 3-dehydroquinate + phosphate. It participates in metabolic intermediate biosynthesis; chorismate biosynthesis; chorismate from D-erythrose 4-phosphate and phosphoenolpyruvate: step 2/7. Its function is as follows. Catalyzes the conversion of 3-deoxy-D-arabino-heptulosonate 7-phosphate (DAHP) to dehydroquinate (DHQ). The chain is 3-dehydroquinate synthase from Listeria welshimeri serovar 6b (strain ATCC 35897 / DSM 20650 / CCUG 15529 / CIP 8149 / NCTC 11857 / SLCC 5334 / V8).